A 193-amino-acid chain; its full sequence is Xanthine phosphoribosyltransferase (193 aa).

Xanthine-binding residues include Leu-20 and Asn-27. 5-phospho-alpha-D-ribose 1-diphosphate is bound at residue 127-131; that stretch reads AYGNA. Position 155 (Lys-155) interacts with xanthine.

It belongs to the purine/pyrimidine phosphoribosyltransferase family. Xpt subfamily. In terms of assembly, homodimer.

It is found in the cytoplasm. The enzyme catalyses XMP + diphosphate = xanthine + 5-phospho-alpha-D-ribose 1-diphosphate. Its pathway is purine metabolism; XMP biosynthesis via salvage pathway; XMP from xanthine: step 1/1. In terms of biological role, converts the preformed base xanthine, a product of nucleic acid breakdown, to xanthosine 5'-monophosphate (XMP), so it can be reused for RNA or DNA synthesis. This is Xanthine phosphoribosyltransferase from Porphyromonas gingivalis (strain ATCC BAA-308 / W83).